Consider the following 292-residue polypeptide: Shikimate dehydrogenase (NADP(+)) (292 aa).

Shikimate contacts are provided by residues 22 to 24 (SLS) and S69. The active-site Proton acceptor is K73. N94 and D111 together coordinate shikimate. Residues 135 to 139 (GVGGA) and I236 contribute to the NADP(+) site. Y238 is a binding site for shikimate. G260 is an NADP(+) binding site.

The protein belongs to the shikimate dehydrogenase family. Homodimer.

The catalysed reaction is shikimate + NADP(+) = 3-dehydroshikimate + NADPH + H(+). It functions in the pathway metabolic intermediate biosynthesis; chorismate biosynthesis; chorismate from D-erythrose 4-phosphate and phosphoenolpyruvate: step 4/7. Functionally, involved in the biosynthesis of the chorismate, which leads to the biosynthesis of aromatic amino acids. Catalyzes the reversible NADPH linked reduction of 3-dehydroshikimate (DHSA) to yield shikimate (SA). The sequence is that of Shikimate dehydrogenase (NADP(+)) from Streptococcus pyogenes serotype M2 (strain MGAS10270).